A 105-amino-acid polypeptide reads, in one-letter code: Phosphoribosyl-AMP cyclohydrolase (105 aa).

Mg(2+) is bound at residue D72. C73 serves as a coordination point for Zn(2+). D74 and D76 together coordinate Mg(2+). C89 and C96 together coordinate Zn(2+).

This sequence belongs to the PRA-CH family. In terms of assembly, homodimer. It depends on Mg(2+) as a cofactor. Requires Zn(2+) as cofactor.

The protein resides in the cytoplasm. The enzyme catalyses 1-(5-phospho-beta-D-ribosyl)-5'-AMP + H2O = 1-(5-phospho-beta-D-ribosyl)-5-[(5-phospho-beta-D-ribosylamino)methylideneamino]imidazole-4-carboxamide. It functions in the pathway amino-acid biosynthesis; L-histidine biosynthesis; L-histidine from 5-phospho-alpha-D-ribose 1-diphosphate: step 3/9. Functionally, catalyzes the hydrolysis of the adenine ring of phosphoribosyl-AMP. The chain is Phosphoribosyl-AMP cyclohydrolase from Listeria innocua serovar 6a (strain ATCC BAA-680 / CLIP 11262).